Consider the following 212-residue polypeptide: Cytidylate kinase (212 aa).

7-15 (GPAASGKGT) lines the ATP pocket.

It belongs to the cytidylate kinase family. Type 1 subfamily.

Its subcellular location is the cytoplasm. The catalysed reaction is CMP + ATP = CDP + ADP. It carries out the reaction dCMP + ATP = dCDP + ADP. In Rhodopseudomonas palustris (strain ATCC BAA-98 / CGA009), this protein is Cytidylate kinase.